Reading from the N-terminus, the 439-residue chain is Taxadien-5-alpha-ol O-acetyltransferase (439 aa).

Catalysis depends on proton acceptor residues His164 and Asp373.

It belongs to the plant acyltransferase family.

It catalyses the reaction taxa-4(20),11-dien-5alpha-ol + acetyl-CoA = taxa-4(20),11-dien-5alpha-yl acetate + CoA. The protein operates within alkaloid biosynthesis; taxol biosynthesis; 10-deacetyl-2-debenzoylbaccatin III from taxa-4(20),11-dien-5alpha-ol: step 1/3. This Taxus chinensis (Chinese yew) protein is Taxadien-5-alpha-ol O-acetyltransferase.